Reading from the N-terminus, the 280-residue chain is tRNase Z TRZ1 (280 aa).

Belongs to the RNase Z family. Homodimer. The cofactor is Zn(2+). Ca(2+) is required as a cofactor. Mn(2+) serves as cofactor. It depends on Mg(2+) as a cofactor.

It localises to the cytoplasm. It carries out the reaction Endonucleolytic cleavage of RNA, removing extra 3' nucleotides from tRNA precursor, generating 3' termini of tRNAs. A 3'-hydroxy group is left at the tRNA terminus and a 5'-phosphoryl group is left at the trailer molecule.. In terms of biological role, zinc phosphodiesterase, which displays tRNA 3'-processing endonuclease activity. Involved in tRNA maturation, by removing a 3'-trailer from precursor tRNA. Can use bis-(p-nitophenyl) phosphate (bpNPP) as substrate. Involved in the processing of small nucleolar RNAs (snoRNAs). In Arabidopsis thaliana (Mouse-ear cress), this protein is tRNase Z TRZ1.